Reading from the N-terminus, the 640-residue chain is Threonine--tRNA ligase (640 aa).

One can recognise a TGS domain in the interval 1–61 (MPIITLPNGD…TEDSTLQIIT (61 aa)). Residues 242-533 (DHRKIGKALD…LIEHYAGFMP (292 aa)) are catalytic. Residues C333, H384, and H510 each coordinate Zn(2+).

Belongs to the class-II aminoacyl-tRNA synthetase family. In terms of assembly, homodimer. Requires Zn(2+) as cofactor.

The protein resides in the cytoplasm. It carries out the reaction tRNA(Thr) + L-threonine + ATP = L-threonyl-tRNA(Thr) + AMP + diphosphate + H(+). Catalyzes the attachment of threonine to tRNA(Thr) in a two-step reaction: L-threonine is first activated by ATP to form Thr-AMP and then transferred to the acceptor end of tRNA(Thr). Also edits incorrectly charged L-seryl-tRNA(Thr). The protein is Threonine--tRNA ligase of Acinetobacter baumannii (strain AB307-0294).